An 897-amino-acid polypeptide reads, in one-letter code: F-BAR domain only protein 1 (897 aa).

Residues 1 to 276 (MIHFFHTLQG…VGFEEYLSSL (276 aa)) are mediates membrane-binding. The 247-residue stretch at 2–248 (IHFFHTLQGE…NVENIGIENL (247 aa)) folds into the F-BAR domain. The stretch at 134–154 (LQKTREGYHSKCVELERLRKE) forms a coiled coil. A disordered region spans residues 475 to 537 (VEDSGLDSPS…PNPAPSSQSN (63 aa)). Over residues 501–520 (PSSQSQSKDSINAASQSRGG) the composition is skewed to polar residues. In terms of domain architecture, MHD spans 630 to 894 (SWPVAAAITE…RFATGKYMAG (265 aa)).

This sequence belongs to the FCHO family. In terms of assembly, may oligomerize and form homotetramer. Interacts with acvr1l/alk8; linking this receptor to clathrin-mediated endocytosis.

It is found in the membrane. The protein resides in the clathrin-coated pit. In terms of biological role, may function in an early step of clathrin-mediated endocytosis. May regulate Bmp signaling by regulating clathrin-mediated endocytosis of Bmp receptors. In Danio rerio (Zebrafish), this protein is F-BAR domain only protein 1 (fcho1).